The following is a 360-amino-acid chain: Ubiquitin carboxyl-terminal hydrolase MIY1 (360 aa).

C28 serves as the catalytic Nucleophile. H216 functions as the Proton acceptor in the catalytic mechanism. The interval 317 to 360 is disordered; sequence KRKIHSHKKNSEIHAPVKKDKFKRRSSLLNAKASEKEKSECVVM. Basic and acidic residues-rich tracts occupy residues 325–335 and 349–360; these read KNSEIHAPVKK and ASEKEKSECVVM.

The protein belongs to the MINDY deubiquitinase family. FAM63 subfamily.

It is found in the cytoplasm. The enzyme catalyses Thiol-dependent hydrolysis of ester, thioester, amide, peptide and isopeptide bonds formed by the C-terminal Gly of ubiquitin (a 76-residue protein attached to proteins as an intracellular targeting signal).. In terms of biological role, hydrolase that can specifically remove 'Lys-48'-linked conjugated ubiquitin from proteins. Has endodeubiquitinase activity. This is Ubiquitin carboxyl-terminal hydrolase MIY1 from Saccharomyces cerevisiae (strain ATCC 204508 / S288c) (Baker's yeast).